A 267-amino-acid polypeptide reads, in one-letter code: Undecaprenyl-diphosphatase (267 aa).

A run of 8 helical transmembrane segments spans residues 1–21 (MSYF…FLPI), 39–59 (QGLA…VIYF), 83–103 (AKLA…GLLM), 111–131 (LRSA…LWWV), 144–164 (TGWK…IPGT), 189–209 (FLMS…KLVT), 218–238 (FLLT…HFFL), and 245–265 (GMTP…AFLL).

It belongs to the UppP family.

The protein localises to the cell inner membrane. It catalyses the reaction di-trans,octa-cis-undecaprenyl diphosphate + H2O = di-trans,octa-cis-undecaprenyl phosphate + phosphate + H(+). Catalyzes the dephosphorylation of undecaprenyl diphosphate (UPP). Confers resistance to bacitracin. This chain is Undecaprenyl-diphosphatase, found in Vibrio parahaemolyticus serotype O3:K6 (strain RIMD 2210633).